A 223-amino-acid polypeptide reads, in one-letter code: Cytidylate kinase (223 aa).

17 to 25 (GPTASGKGT) is an ATP binding site.

It belongs to the cytidylate kinase family. Type 1 subfamily.

Its subcellular location is the cytoplasm. The enzyme catalyses CMP + ATP = CDP + ADP. It carries out the reaction dCMP + ATP = dCDP + ADP. This Bordetella pertussis (strain Tohama I / ATCC BAA-589 / NCTC 13251) protein is Cytidylate kinase.